The sequence spans 359 residues: Protein Wnt-9b (359 aa).

Residues 1-23 (MRPAPALALAALCLLVLPAAAAA) form the signal peptide. Intrachain disulfides connect Cys-91–Cys-102, Cys-137–Cys-145, Cys-147–Cys-164, Cys-212–Cys-226, Cys-214–Cys-221, Cys-293–Cys-318, Cys-307–Cys-313, Cys-317–Cys-357, Cys-333–Cys-348, Cys-335–Cys-345, and Cys-340–Cys-341. The N-linked (GlcNAc...) asparagine glycan is linked to Asn-101. A lipid anchor (O-palmitoleoyl serine; by PORCN) is attached at Ser-218.

It belongs to the Wnt family. As to quaternary structure, forms a soluble 1:1 complex with AFM; this prevents oligomerization and is required for prolonged biological activity. The complex with AFM may represent the physiological form in body fluids. Component of the Wnt-Fzd-LRP5-LRP6 signaling complex that contains a WNT protein, a FZD protein and LRP5 or LRP6. Interacts directly in the complex with LRP6. Interacts with PKD1 (via extracellular domain). Palmitoleoylation is required for efficient binding to frizzled receptors. Depalmitoleoylation leads to Wnt signaling pathway inhibition.

Its subcellular location is the secreted. It is found in the extracellular space. The protein localises to the extracellular matrix. Ligand for members of the frizzled family of seven transmembrane receptors. Functions in the canonical Wnt/beta-catenin signaling pathway. Required for normal embryonic kidney development, and for normal development of the urogenital tract, including uterus and part of the oviduct and the upper vagina in females, and epididymis and vas deferens in males. Activates a signaling cascade in the metanephric mesenchyme that induces tubulogenesis. Acts upstream of WNT4 in the signaling pathways that mediate development of kidney tubules and the Muellerian ducts. Plays a role in cranofacial development and is required for normal fusion of the palate during embryonic development. This Mus musculus (Mouse) protein is Protein Wnt-9b (Wnt9b).